A 311-amino-acid chain; its full sequence is N-acetylmuramic acid 6-phosphate etherase (311 aa).

One can recognise an SIS domain in the interval 64-227 (IYQRLIDNGR…SSGVMIKLGK (164 aa)). The Proton donor role is filled by E92. E123 is an active-site residue.

Belongs to the GCKR-like family. MurNAc-6-P etherase subfamily. As to quaternary structure, homodimer.

The enzyme catalyses N-acetyl-D-muramate 6-phosphate + H2O = N-acetyl-D-glucosamine 6-phosphate + (R)-lactate. It functions in the pathway amino-sugar metabolism; N-acetylmuramate degradation. In terms of biological role, specifically catalyzes the cleavage of the D-lactyl ether substituent of MurNAc 6-phosphate, producing GlcNAc 6-phosphate and D-lactate. This is N-acetylmuramic acid 6-phosphate etherase from Prochlorococcus marinus (strain SARG / CCMP1375 / SS120).